Consider the following 306-residue polypeptide: MELKDYYAIMGVKPTDDLKTIKTAYRRLARKYHPDVSKEPDAEARFKEVAEAWEVLSDEQRRAEYDQLWQHRNDPQFNRQFQQHEGQPYNAEDFDDIFSSIFGQHGRHSHHRHAARGHDIEIEVAVFLEETLEEHQRTISYSVPVYNAFGLVEREIPRTLNVKIPAGVSNGQRIRLKGQGTPGENGGPNGDLWLVIHIAPHPLFDIVNQDLEVVLPLAPWEAALGAKVSVPTLKERILLTIPPGSQAGQRLRIKGKGLASKKHTGDLYAVIKIVMPPKPDEKTAALWQQLADAQSSFDPRQQWGKA.

In terms of domain architecture, J spans 5–69; it reads DYYAIMGVKP…QRRAEYDQLW (65 aa).

The protein localises to the cytoplasm. It localises to the nucleoid. In terms of biological role, DNA-binding protein that preferentially recognizes a curved DNA sequence. It is probably a functional analog of DnaJ; displays overlapping activities with DnaJ, but functions under different conditions, probably acting as a molecular chaperone in an adaptive response to environmental stresses other than heat shock. Lacks autonomous chaperone activity; binds native substrates and targets them for recognition by DnaK. Its activity is inhibited by the binding of CbpM. This is Curved DNA-binding protein from Salmonella arizonae (strain ATCC BAA-731 / CDC346-86 / RSK2980).